The primary structure comprises 163 residues: Phosphopantetheine adenylyltransferase (163 aa).

Ser-8 is a binding site for substrate. ATP is bound by residues 8-9 and His-16; that span reads SF. Residues Lys-40, Thr-72, and Arg-86 each contribute to the substrate site. Residues 87–89, Glu-97, and 122–128 each bind ATP; these read GLR and HSFLSSS.

The protein belongs to the bacterial CoaD family. In terms of assembly, homohexamer. Mg(2+) serves as cofactor.

Its subcellular location is the cytoplasm. It catalyses the reaction (R)-4'-phosphopantetheine + ATP + H(+) = 3'-dephospho-CoA + diphosphate. It functions in the pathway cofactor biosynthesis; coenzyme A biosynthesis; CoA from (R)-pantothenate: step 4/5. In terms of biological role, reversibly transfers an adenylyl group from ATP to 4'-phosphopantetheine, yielding dephospho-CoA (dPCoA) and pyrophosphate. The sequence is that of Phosphopantetheine adenylyltransferase from Synechococcus sp. (strain CC9902).